The following is a 284-amino-acid chain: Elongation factor Ts (284 aa).

The segment at Thr-80–Val-83 is involved in Mg(2+) ion dislocation from EF-Tu.

This sequence belongs to the EF-Ts family.

It localises to the cytoplasm. Functionally, associates with the EF-Tu.GDP complex and induces the exchange of GDP to GTP. It remains bound to the aminoacyl-tRNA.EF-Tu.GTP complex up to the GTP hydrolysis stage on the ribosome. In Neisseria meningitidis serogroup C (strain 053442), this protein is Elongation factor Ts.